Here is a 134-residue protein sequence, read N- to C-terminus: D-ribose pyranase (134 aa).

Residue histidine 20 is the Proton donor of the active site. Residues aspartate 28, histidine 101, and tyrosine 123–asparagine 125 each bind substrate.

Belongs to the RbsD / FucU family. RbsD subfamily. In terms of assembly, homodecamer.

Its subcellular location is the cytoplasm. The enzyme catalyses beta-D-ribopyranose = beta-D-ribofuranose. It participates in carbohydrate metabolism; D-ribose degradation; D-ribose 5-phosphate from beta-D-ribopyranose: step 1/2. In terms of biological role, catalyzes the interconversion of beta-pyran and beta-furan forms of D-ribose. The polypeptide is D-ribose pyranase (Pseudomonas entomophila (strain L48)).